A 422-amino-acid polypeptide reads, in one-letter code: Histidine--tRNA ligase (422 aa).

Belongs to the class-II aminoacyl-tRNA synthetase family. Homodimer.

Its subcellular location is the cytoplasm. The catalysed reaction is tRNA(His) + L-histidine + ATP = L-histidyl-tRNA(His) + AMP + diphosphate + H(+). This is Histidine--tRNA ligase from Vibrio parahaemolyticus serotype O3:K6 (strain RIMD 2210633).